The following is a 195-amino-acid chain: MVVIYIMSNKQGLIILISGPSGVGKGTIVSRLLSDNNLKLNVSISATTRKKRASEVEGVHYFFKTKEEFEQMIANNQLLEYANYVNNYYGTPLSLVKEILDKNENLILEIEYQGVIQVLRKGFRTLSIFVLPPSEDELVARLKKRGTENDEVIKHRLEQAVKEYAHRELYDHTIINDDLEKTIEDIKQLILKYNQ.

Residues 12–191 enclose the Guanylate kinase-like domain; it reads GLIILISGPS…TIEDIKQLIL (180 aa). 19–26 contributes to the ATP binding site; sequence GPSGVGKG.

Belongs to the guanylate kinase family.

The protein localises to the cytoplasm. The enzyme catalyses GMP + ATP = GDP + ADP. Functionally, essential for recycling GMP and indirectly, cGMP. The polypeptide is Guanylate kinase (gmk) (Mycoplasmoides gallisepticum (strain R(low / passage 15 / clone 2)) (Mycoplasma gallisepticum)).